The sequence spans 567 residues: Proline--tRNA ligase (567 aa).

Belongs to the class-II aminoacyl-tRNA synthetase family. ProS type 1 subfamily. Homodimer.

The protein resides in the cytoplasm. The enzyme catalyses tRNA(Pro) + L-proline + ATP = L-prolyl-tRNA(Pro) + AMP + diphosphate. Catalyzes the attachment of proline to tRNA(Pro) in a two-step reaction: proline is first activated by ATP to form Pro-AMP and then transferred to the acceptor end of tRNA(Pro). As ProRS can inadvertently accommodate and process non-cognate amino acids such as alanine and cysteine, to avoid such errors it has two additional distinct editing activities against alanine. One activity is designated as 'pretransfer' editing and involves the tRNA(Pro)-independent hydrolysis of activated Ala-AMP. The other activity is designated 'posttransfer' editing and involves deacylation of mischarged Ala-tRNA(Pro). The misacylated Cys-tRNA(Pro) is not edited by ProRS. This Staphylococcus aureus (strain MRSA252) protein is Proline--tRNA ligase.